The chain runs to 87 residues: Large ribosomal subunit protein bL27 (87 aa).

The protein belongs to the bacterial ribosomal protein bL27 family.

This is Large ribosomal subunit protein bL27 from Pseudarthrobacter chlorophenolicus (strain ATCC 700700 / DSM 12829 / CIP 107037 / JCM 12360 / KCTC 9906 / NCIMB 13794 / A6) (Arthrobacter chlorophenolicus).